The primary structure comprises 209 residues: Small ribosomal subunit protein uS4 (209 aa).

Positions 9, 12, 26, and 31 each coordinate Zn(2+). A C4-type zinc finger spans residues 9–31; it reads CRLCRREGVKLYLKGERCYSPKC. Residues 100 to 162 enclose the S4 RNA-binding domain; sequence RLDNVVYRLG…RNLELIRQNL (63 aa).

It belongs to the universal ribosomal protein uS4 family. In terms of assembly, part of the 30S ribosomal subunit. Contacts protein S5. The interaction surface between S4 and S5 is involved in control of translational fidelity. Requires Zn(2+) as cofactor.

In terms of biological role, one of the primary rRNA binding proteins, it binds directly to 16S rRNA where it helps nucleate assembly of the body and platform of the 30S subunit. In Thermus thermophilus (strain ATCC BAA-163 / DSM 7039 / HB27), this protein is Small ribosomal subunit protein uS4 (rpsD).